The following is a 396-amino-acid chain: uncharacterized protein (396 aa).

Transmembrane regions (helical) follow at residues 7-27 (SDDV…SIGL), 36-56 (AVSG…VGVL), 62-82 (VYDT…LFQI), 94-114 (LLFI…LAFF), 159-179 (VVAD…IPAL), 218-238 (IAFN…VSGY), 250-270 (GTLG…IFLF), 285-305 (TFLI…RLIV), 310-330 (LILL…LAAG), 340-360 (ILLA…MAIA), and 367-387 (VAPI…VGTF).

Its subcellular location is the cell membrane. This is an uncharacterized protein from Bacillus subtilis (strain 168).